Here is a 684-residue protein sequence, read N- to C-terminus: Signal peptide peptidase-like 2C (684 aa).

Positions 1 to 21 (MACLGFLLPVGFLLLISTVAG) are cleaved as a signal peptide. The Lumenal portion of the chain corresponds to 22 to 186 (GKYGVAHVVS…APPEPIIDYN (165 aa)). Residues 83-163 (SPSQRPLRQT…HYADMLDILS (81 aa)) form the PA domain. Asn100 carries an N-linked (GlcNAc...) asparagine glycan. Residues 187–207 (MLVIFILAVGTVAAGGYWAGL) form a helical membrane-spanning segment. The Cytoplasmic segment spans residues 208–253 (TEANRLQRRRARRGGGSGGHHQLQEAAAAEGAQKEDNEDIPVDFTP). The segment at 216 to 242 (RRARRGGGSGGHHQLQEAAAAEGAQKE) is disordered. A compositionally biased stretch (low complexity) spans 227-238 (HHQLQEAAAAEG). The chain crosses the membrane as a helical span at residues 254–274 (AMTGVVVTLSCSLMLLLYFFY). Over 275–276 (DH) the chain is Lumenal. Residues 277–297 (FVYVTIGIFGLGAGIGLYSCL) traverse the membrane as a helical segment. Over 298 to 319 (SPLVCRLSLRQYQRPPHSLWAS) the chain is Cytoplasmic. Residues 320–340 (LPLPLLLLASLCATVIIFWVA) form a helical membrane-spanning segment. Topologically, residues 341–346 (YRNEDR) are lumenal. A helical transmembrane segment spans residues 347–365 (WAWLLQDTLGISYCLFVLH). The Cytoplasmic segment spans residues 366-376 (RVRLPTLKNCS). Residues 377–397 (SFLLALLAFDVFFVFVTPFFT) traverse the membrane as a helical segment. Asp386 is a catalytic residue. Residues 398–439 (KTGESIMAQVALGPAESSSHERLPMVLKVPRLRVSALTLCSQ) lie on the Lumenal side of the membrane. Residues 440–460 (PFSILGFGDIVVPGFLVAYCC) form a helical membrane-spanning segment. Asp448 is an active-site residue. Topologically, residues 461 to 472 (RFDVQVCSRQIY) are cytoplasmic. A helical membrane pass occupies residues 473 to 493 (FVACTVAYAVGLLVTFMAMVL). Residues 494 to 495 (MQ) are Lumenal-facing. The chain crosses the membrane as a helical span at residues 496–516 (MGQPALLYLVSSTLLTSLAVA). The short motif at 499 to 501 (PAL) is the PAL element. Topologically, residues 517–684 (ACRQELSLFW…RKSMSTQAPL (168 aa)) are cytoplasmic. A disordered region spans residues 548–614 (KQEGAADAHT…SDAHLDPNEL (67 aa)). Polar residues predominate over residues 582-592 (EIVTISENEAT). Residues 594 to 611 (PEDRSDSSEGWSDAHLDP) show a composition bias toward basic and acidic residues.

The protein belongs to the peptidase A22B family. Interacts (via active sites) with FREY; the interaction stabilizes FREY1 protein and inhibits SPPL2C proteolytic activity. In terms of processing, glycosylated. Highly expressed in testis where it is primarily localised in spermatids (at protein level).

Its subcellular location is the endoplasmic reticulum membrane. Functionally, sperm-specific intramembrane-cleaving aspartic protease (I-CLiP) that cleaves distinct tail-anchored proteins and SNARE proteins. In elongated spermatids, modulates intracellular Ca(2+) homeostasis by controlling PLN abundance through proteolytic cleavage. During spermatogenesis, processes SNARE proteins and impacts vesicular trafficking which supports compartmental reorganization in maturating spermatids and may play a role in formation of the acrosome. In terms of biological role, in round spermatids, acts as a scaffold protein supporting FREY1 in IZUMO1 recruitment at the endoplasmic reticulum membrane and coordination of IZUMO1 complex assembly. Stabilizes FREY1 at the endoplasmic reticulum membrane through interaction. May recruit IZUMO1 interaction partners. The protein is Signal peptide peptidase-like 2C of Homo sapiens (Human).